A 143-amino-acid polypeptide reads, in one-letter code: Transmembrane protein 80 (143 aa).

Transmembrane regions (helical) follow at residues 21 to 41 (MLFYLSGTYYALYFLATLLMI), 55 to 75 (LVLDLALLFLMGILEAVRLYL), 99 to 119 (ALLSAHFLLWQALVLWADWAL), and 121 to 141 (ATLLALHGLEAVLQVVAIAAF).

The protein resides in the membrane. It is found in the cell projection. Its subcellular location is the cilium. In Homo sapiens (Human), this protein is Transmembrane protein 80.